The following is an 863-amino-acid chain: Receptor-like protein 9DC3 (863 aa).

The signal sequence occupies residues 1-21 (MGCVKLVFFMLYVFLFQLVSS). The Extracellular portion of the chain corresponds to 22-812 (SSLPHLCPED…EEDSPMISWQ (791 aa)). The segment at 24-90 (LPHLCPEDQA…GVHCDETTGQ (67 aa)) is N-cap. 2 N-linked (GlcNAc...) asparagine glycosylation sites follow: Asn71 and Asn108. The stretch at 91–114 (VIALDLRCSQLQGKFHSNSSLFQL) is one LRR 1; degenerate repeat. 2 LRR repeats span residues 115–138 (SNLKRLDLSNNNFIGSLISPKFGE) and 140–163 (SDLTHLDLSDSSFTGVIPSEISHL). An LRR 4; degenerate repeat occupies 164-190 (SKLHVLLIGDQYGLSIVPHNFEPLLKN). Residues Asn190, Asn203, and Asn211 are each glycosylated (N-linked (GlcNAc...) asparagine). 6 LRR repeats span residues 191-213 (LTQLRELNLYEVNLSSTVPSNFS), 214-237 (SHLTTLQLSGTGLRGLLPERVFHL), 240-262 (LEFLDLSYNSQLMVRFPTTKWNS), 264-286 (ASLMKLYVHSVNIADRIPESFSH), 287-311 (LTSLHELDMGYTNLSGPIPKPLWNL), and 312-336 (TNIESLDLRYNHLEGPIPQLPIFEK). N-linked (GlcNAc...) asparagine glycosylation occurs at Asn261. N-linked (GlcNAc...) asparagine glycans are attached at residues Asn299 and Asn310. One copy of the LRR 11; degenerate repeat lies at 337 to 357 (LKKLSLFRNDNLDGGLEFLSF). LRR repeat units follow at residues 358-382 (NTQLERLDLSSNSLTGPIPSNISGL), 383-406 (QNLECLYLSSNHLNGSIPSWIFSL), 408-428 (SLVELDLSNNTFSGKIQEFKS), 429-452 (KTLSAVTLKQNKLKGRIPNSLLNQ), 454-476 (NLQLLLLSHNNISGHISSAICNL), 477-500 (KTLILLDLGSNNLEGTIPQCVVER), 502-524 (EYLSHLDLSKNRLSGTINTTFSV), 525-549 (GNILRVISLHGNKLTGKVPRSLINC), 551-572 (YLALLDLGNNQLNDTFPNWLGH), 573-597 (LSQLKILSLRSNKLHGPIKSSGNTN), 599-623 (FTRLQIMDLSYNGFSGNLPESILGN), 667-690 (LDSNMIINLSKNRFEGRIPSIIGD), 691-714 (LVGLRTLNLSHNVLEGHIPASFQN), 715-739 (LSVLESLDLSSNKISGEIPQQLASL), and 741-759 (FLEVLNLSHNHLVGCIPKG). Asn378, Asn396, and Asn416 each carry an N-linked (GlcNAc...) asparagine glycan. N-linked (GlcNAc...) asparagine glycosylation occurs at Asn464. The N-linked (GlcNAc...) asparagine glycan is linked to Asn519. Asn563 is a glycosylation site (N-linked (GlcNAc...) asparagine). Residues Asn674, Asn698, and Asn714 are each glycosylated (N-linked (GlcNAc...) asparagine). 2 N-linked (GlcNAc...) asparagine glycosylation sites follow: Asn746 and Asn767. Residues 760–812 (KQFDSFGNTSYQGNDGLCGFPLSKLCGGDDQVTTPAELDQEEEEEDSPMISWQ) are C-cap/acidic domain. A helical membrane pass occupies residues 813 to 833 (GVLVGYGCGLVIGLSVIYIMW). Topologically, residues 834–863 (STQYPAWFSRMHLKLEQIVTTRMKKHKKRY) are cytoplasmic.

The protein belongs to the RLP family.

The protein resides in the cell membrane. Functionally, involved in plant defense. Confers resistance to the fungal pathogen C.fulvum through recognition of the AVR9 elicitor protein. This chain is Receptor-like protein 9DC3, found in Solanum pimpinellifolium (Currant tomato).